We begin with the raw amino-acid sequence, 599 residues long: ATP-binding cassette sub-family E member 1 (599 aa).

2 consecutive 4Fe-4S ferredoxin-type domains span residues 7 to 37 and 46 to 75; these read RIAI…MGKL and KIAW…IVNL. Residue Lys-20 forms a Glycyl lysine isopeptide (Lys-Gly) (interchain with G-Cter in ubiquitin) linkage. 2 ABC transporter domains span residues 79–315 and 342–562; these read LEKE…FLDG and VKKM…LSQL. Residues 110-117 and 379-386 each bind ATP; these read GTNGIGKS and GENGTGKT. Ser-417 carries the post-translational modification Phosphoserine. Thr-550 is subject to Phosphothreonine.

This sequence belongs to the ABC transporter superfamily. ABCE family. In terms of assembly, (Microbial infection) Interacts with Chandipura virus matrix protein. Interacts with PINK1. Interacts with CNOT4. Interacts with PELO. Probably heterodimerizes with RNASEL; this interaction inhibits RNASEL. As to quaternary structure, (Microbial infection) Interacts with HIV-1 proteins Vif and Gag. In terms of assembly, (Microbial infection) Interacts with HIV-2 protein Gag. Ubiquitinated by CNOT4. Ubiquitination mediates the recruitment of autophagy receptors to the mitochondrial outer membrane and initiates mitophagy.

Its subcellular location is the cytoplasm. The protein localises to the mitochondrion. The catalysed reaction is GTP + H2O = GDP + phosphate + H(+). It catalyses the reaction ATP + H2O = ADP + phosphate + H(+). It carries out the reaction CTP + H2O = CDP + phosphate + H(+). The enzyme catalyses UTP + H2O = UDP + phosphate + H(+). Its function is as follows. Nucleoside-triphosphatase (NTPase) involved in ribosome recycling by mediating ribosome disassembly. Able to hydrolyze ATP, GTP, UTP and CTP. Splits ribosomes into free 60S subunits and tRNA- and mRNA-bound 40S subunits. Acts either after canonical termination facilitated by release factors (ETF1/eRF1) or after recognition of stalled and vacant ribosomes by mRNA surveillance factors (PELO/Pelota). Involved in the No-Go Decay (NGD) pathway: recruited to stalled ribosomes by the Pelota-HBS1L complex, and drives the disassembly of stalled ribosomes, followed by degradation of damaged mRNAs as part of the NGD pathway. Also plays a role in quality control of translation of mitochondrial outer membrane-localized mRNA. As part of the PINK1-regulated signaling, ubiquitinated by CNOT4 upon mitochondria damage; this modification generates polyubiquitin signals that recruit autophagy receptors to the mitochondrial outer membrane and initiate mitophagy. RNASEL-specific protein inhibitor which antagonizes the binding of 2-5A (5'-phosphorylated 2',5'-linked oligoadenylates) to RNASEL. Negative regulator of the anti-viral effect of the interferon-regulated 2-5A/RNASEL pathway. Functionally, (Microbial infection) May act as a chaperone for post-translational events during HIV-1 capsid assembly. (Microbial infection) Plays a role in the down-regulation of the 2-5A/RNASEL pathway during encephalomyocarditis virus (EMCV) and HIV-1 infections. The chain is ATP-binding cassette sub-family E member 1 (ABCE1) from Homo sapiens (Human).